Consider the following 669-residue polypeptide: Dymeclin (669 aa).

Glycine 2 carries N-myristoyl glycine lipidation.

This sequence belongs to the dymeclin family. In terms of assembly, interacts with GOLM1 and PPIB. In terms of processing, myristoylated in vitro; myristoylation is not essential for protein targeting to Golgi compartment. Expressed in most embryo-fetal and adult tissues. Abundant in primary chondrocytes, osteoblasts, cerebellum, kidney, lung, stomach, heart, pancreas and fetal brain. Very low or no expression in the spleen, thymus, esophagus, bladder and thyroid gland.

It is found in the cytoplasm. Its subcellular location is the golgi apparatus. It localises to the membrane. In terms of biological role, necessary for correct organization of Golgi apparatus. Involved in bone development. In Homo sapiens (Human), this protein is Dymeclin (DYM).